The sequence spans 73 residues: Methionyl-tRNA formyltransferase (73 aa).

It belongs to the Fmt family.

The catalysed reaction is L-methionyl-tRNA(fMet) + (6R)-10-formyltetrahydrofolate = N-formyl-L-methionyl-tRNA(fMet) + (6S)-5,6,7,8-tetrahydrofolate + H(+). Functionally, attaches a formyl group to the free amino group of methionyl-tRNA(fMet). The formyl group appears to play a dual role in the initiator identity of N-formylmethionyl-tRNA by promoting its recognition by IF2 and preventing the misappropriation of this tRNA by the elongation apparatus. The chain is Methionyl-tRNA formyltransferase (fmt) from Rickettsia rickettsii.